A 237-amino-acid chain; its full sequence is Oligoribonuclease, mitochondrial (237 aa).

Residues 1-25 (MLGGSLGSRLLRGVGGSHGRFGARG) constitute a mitochondrion transit peptide. An Exonuclease domain is found at 43 to 207 (MVWVDLEMTG…DDISESIKEL (165 aa)). Asp47 and Glu49 together coordinate Mg(2+). Ser92 carries the phosphoserine modification. The residue at position 122 (Tyr122) is a Phosphotyrosine. Asp147 contacts Mg(2+). An N6-acetyllysine modification is found at Lys173. Residue His194 is part of the active site. Asp199 provides a ligand contact to Mg(2+).

The protein belongs to the oligoribonuclease family. As to quaternary structure, homodimer. Homotetramer. The cofactor is Mn(2+). It depends on Mg(2+) as a cofactor. As to expression, highly expressed in the heart and at lower levels in the lymph nodes, brain, lung, liver, spleen and thymus.

It localises to the mitochondrion intermembrane space. Its subcellular location is the mitochondrion matrix. The protein resides in the mitochondrion. The protein localises to the cytoplasm. It is found in the nucleus. Its activity is regulated as follows. Inhibited by adenosine 3',5'-bisphosphate. Its function is as follows. 3'-to-5'exoribonuclease that preferentially degrades DNA and RNA oligonucleotides composed of only two nucleotides. Binds and degrades longer oligonucleotides with a lower affinity. Plays dual roles in mitochondria, scavenging nanoRNAs (small RNA oligonucleotides of &lt;5 nucleotides) that are produced by the degradosome and clearing short RNAs that are generated by RNA processing. Essential for correct initiation of mitochondrial transcription, degrading mitochondrial RNA dinucleotides to prevent RNA-primed transcription at non-canonical sites in the mitochondrial genome. Essential for embryonic development. 3'-to-5'exoribonuclease that preferentially degrades DNA and RNA oligonucleotides composed of only two nucleotides. The protein is Oligoribonuclease, mitochondrial (REXO2) of Homo sapiens (Human).